A 297-amino-acid chain; its full sequence is Probable GTP 3',8-cyclase (297 aa).

The 224-residue stretch at 4-227 (RYGRQIRSFR…MQNRKKYVID (224 aa)) folds into the Radical SAM core domain. Arg13 serves as a coordination point for GTP. Residues Cys20 and Cys24 each contribute to the [4Fe-4S] cluster site. Tyr26 provides a ligand contact to S-adenosyl-L-methionine. Cys27 serves as a coordination point for [4Fe-4S] cluster. GTP is bound at residue Lys61. Gly65 is an S-adenosyl-L-methionine binding site. A GTP-binding site is contributed by Thr91. Ser115 contributes to the S-adenosyl-L-methionine binding site. GTP is bound at residue Lys152. The [4Fe-4S] cluster site is built by Cys243 and Cys246. 248-250 (RIR) serves as a coordination point for GTP. Position 260 (Cys260) interacts with [4Fe-4S] cluster.

Belongs to the radical SAM superfamily. MoaA family. The cofactor is [4Fe-4S] cluster.

It catalyses the reaction GTP + AH2 + S-adenosyl-L-methionine = (8S)-3',8-cyclo-7,8-dihydroguanosine 5'-triphosphate + 5'-deoxyadenosine + L-methionine + A + H(+). Its pathway is cofactor biosynthesis; molybdopterin biosynthesis. Catalyzes the cyclization of GTP to (8S)-3',8-cyclo-7,8-dihydroguanosine 5'-triphosphate. The protein is Probable GTP 3',8-cyclase of Methanococcus maripaludis (strain DSM 14266 / JCM 13030 / NBRC 101832 / S2 / LL).